A 1200-amino-acid polypeptide reads, in one-letter code: Nuclear pore complex protein Nup133 (1200 aa).

A disordered region spans residues 1–28 (MERNLQKQLYGISRESSPGARRYSMPAA).

The protein belongs to the nucleoporin Nup133 family. In terms of assembly, forms part of the Nup107-Nup160 subcomplex in the nuclear pore.

The protein resides in the nucleus. Its subcellular location is the nuclear pore complex. Probable component of the nuclear pore complex (NPC). Plays a role in NPC assembly and/or maintenance. This is Nuclear pore complex protein Nup133 from Drosophila melanogaster (Fruit fly).